The primary structure comprises 652 residues: Acetyl-coenzyme A synthetase (652 aa).

CoA contacts are provided by residues Arg-191–Arg-194, Thr-311, and Asn-335. ATP is bound by residues Gly-387–Pro-389, Asp-411–Thr-416, Asp-500, and Arg-515. Ser-523 contacts CoA. Residue Arg-526 participates in ATP binding. Mg(2+) is bound by residues Val-537, His-539, and Ile-542. Arg-584 serves as a coordination point for CoA. Lys-609 is modified (N6-acetyllysine; by Pat).

This sequence belongs to the ATP-dependent AMP-binding enzyme family. In terms of assembly, monomer. The cofactor is Mg(2+). Acetylated. Deacetylation by the SIR2-homolog deacetylase activates the enzyme.

It catalyses the reaction acetate + ATP + CoA = acetyl-CoA + AMP + diphosphate. Catalyzes the conversion of acetate into acetyl-CoA (AcCoA), an essential intermediate at the junction of anabolic and catabolic pathways. Acs undergoes a two-step reaction. In the first half reaction, Acs combines acetate with ATP to form acetyl-adenylate (AcAMP) intermediate. In the second half reaction, it can then transfer the acetyl group from AcAMP to the sulfhydryl group of CoA, forming the product AcCoA. Required for acetate recapture but not for acetate excretion when this organism is grown on ethanolamine. In terms of biological role, enables the cell to use acetate during aerobic growth to generate energy via the TCA cycle, and biosynthetic compounds via the glyoxylate shunt. Acetylates CheY, the response regulator involved in flagellar movement and chemotaxis. The sequence is that of Acetyl-coenzyme A synthetase from Salmonella typhimurium (strain LT2 / SGSC1412 / ATCC 700720).